Here is a 260-residue protein sequence, read N- to C-terminus: Carbonic anhydrase 2 (260 aa).

An N-acetylserine modification is found at Ser2. Ser2 carries the phosphoserine modification. One can recognise an Alpha-carbonic anhydrase domain in the interval 3 to 259 (HHWGYGKHNG…LKGRQVKASF (257 aa)). Catalysis depends on His64, which acts as the Proton donor/acceptor. 3 residues coordinate Zn(2+): His94, His96, and His119. A phosphoserine mark is found at Ser165 and Ser172. 198–199 (TT) lines the substrate pocket.

This sequence belongs to the alpha-carbonic anhydrase family. Interacts with SLC4A4 and SLC26A6. Interaction with SLC4A7 regulates SLC4A7 transporter activity. Requires Zn(2+) as cofactor.

Its subcellular location is the cytoplasm. The protein localises to the cell membrane. The catalysed reaction is hydrogencarbonate + H(+) = CO2 + H2O. It carries out the reaction urea = cyanamide + H2O. Its activity is regulated as follows. Inhibited by acetazolamide. In terms of biological role, catalyzes the reversible hydration of carbon dioxide. Can also hydrate cyanamide to urea. Involved in the regulation of fluid secretion into the anterior chamber of the eye. Essential for bone resorption and osteoclast differentiation. Contributes to intracellular pH regulation in the duodenal upper villous epithelium during proton-coupled peptide absorption. Stimulates the chloride-bicarbonate exchange activity of SLC26A6. The sequence is that of Carbonic anhydrase 2 (CA2) from Oryctolagus cuniculus (Rabbit).